The primary structure comprises 139 residues: Large ribosomal subunit protein uL16 (139 aa).

Positions 1-16 (MLIPRRVKHRKQHHPG) are enriched in basic residues. The segment at 1–25 (MLIPRRVKHRKQHHPGRSGQATGGT) is disordered.

This sequence belongs to the universal ribosomal protein uL16 family. Part of the 50S ribosomal subunit.

Binds 23S rRNA and is also seen to make contacts with the A and possibly P site tRNAs. The sequence is that of Large ribosomal subunit protein uL16 from Leifsonia xyli subsp. xyli (strain CTCB07).